The chain runs to 833 residues: Phenylalanine--tRNA ligase beta subunit (833 aa).

In terms of domain architecture, tRNA-binding spans 42–157 (ADLKGPLAVG…PEYEVGTDAI (116 aa)). The B5 domain occupies 411-485 (SAPHTITIPA…RLEGYENLPS (75 aa)). Positions 463, 469, 472, and 473 each coordinate Mg(2+). One can recognise an FDX-ACB domain in the interval 739–832 (STFPVATQDV…AAERTGAALR (94 aa)).

It belongs to the phenylalanyl-tRNA synthetase beta subunit family. Type 1 subfamily. In terms of assembly, tetramer of two alpha and two beta subunits. It depends on Mg(2+) as a cofactor.

It is found in the cytoplasm. The enzyme catalyses tRNA(Phe) + L-phenylalanine + ATP = L-phenylalanyl-tRNA(Phe) + AMP + diphosphate + H(+). The sequence is that of Phenylalanine--tRNA ligase beta subunit from Streptomyces avermitilis (strain ATCC 31267 / DSM 46492 / JCM 5070 / NBRC 14893 / NCIMB 12804 / NRRL 8165 / MA-4680).